The chain runs to 217 residues: Glycosylphosphatidylinositol anchor biosynthesis protein 11 (217 aa).

The next 6 helical transmembrane spans lie at 45-61, 74-94, 111-131, 138-158, 169-189, and 195-215; these read TWQT…YWFI, WLLV…ATVY, VTCI…GAPF, TWLL…SVLN, YFIS…LDWD, and WPIP…TFCS.

It belongs to the PIGF family.

Its subcellular location is the endoplasmic reticulum membrane. The protein operates within glycolipid biosynthesis; glycosylphosphatidylinositol-anchor biosynthesis. Acts in the GPI biosynthetic pathway between GlcNAc-PI synthesis and GPI transfer to protein. In Eremothecium gossypii (strain ATCC 10895 / CBS 109.51 / FGSC 9923 / NRRL Y-1056) (Yeast), this protein is Glycosylphosphatidylinositol anchor biosynthesis protein 11 (GPI11).